We begin with the raw amino-acid sequence, 199 residues long: Glycerol-3-phosphate acyltransferase (199 aa).

5 helical membrane-spanning segments follow: residues 3-23 (YILI…YLLP), 50-70 (VIGF…VLVF), 77-97 (IHYT…PVFL), 110-130 (GVFF…WISI), and 136-156 (YVSL…FFFN).

This sequence belongs to the PlsY family. As to quaternary structure, probably interacts with PlsX.

It localises to the cell inner membrane. The catalysed reaction is an acyl phosphate + sn-glycerol 3-phosphate = a 1-acyl-sn-glycero-3-phosphate + phosphate. The protein operates within lipid metabolism; phospholipid metabolism. Functionally, catalyzes the transfer of an acyl group from acyl-phosphate (acyl-PO(4)) to glycerol-3-phosphate (G3P) to form lysophosphatidic acid (LPA). This enzyme utilizes acyl-phosphate as fatty acyl donor, but not acyl-CoA or acyl-ACP. The chain is Glycerol-3-phosphate acyltransferase from Pseudothermotoga lettingae (strain ATCC BAA-301 / DSM 14385 / NBRC 107922 / TMO) (Thermotoga lettingae).